A 255-amino-acid polypeptide reads, in one-letter code: Pimeloyl-[acyl-carrier protein] methyl ester esterase (255 aa).

Residues 16-241 (LVLVHGWGMN…QSSHAPFMTE (226 aa)) enclose the AB hydrolase-1 domain. Residues W22, 82–83 (SL), and 143–147 (FMALQ) contribute to the substrate site. Residue S82 is the Nucleophile of the active site. Residues D207 and H235 contribute to the active site. Residue H235 coordinates substrate.

This sequence belongs to the AB hydrolase superfamily. Carboxylesterase BioH family. As to quaternary structure, monomer.

The protein resides in the cytoplasm. The catalysed reaction is 6-carboxyhexanoyl-[ACP] methyl ester + H2O = 6-carboxyhexanoyl-[ACP] + methanol + H(+). It participates in cofactor biosynthesis; biotin biosynthesis. In terms of biological role, the physiological role of BioH is to remove the methyl group introduced by BioC when the pimeloyl moiety is complete. It allows to synthesize pimeloyl-ACP via the fatty acid synthetic pathway through the hydrolysis of the ester bonds of pimeloyl-ACP esters. This chain is Pimeloyl-[acyl-carrier protein] methyl ester esterase, found in Vibrio cholerae serotype O1 (strain ATCC 39315 / El Tor Inaba N16961).